Reading from the N-terminus, the 348-residue chain is MRRKNNNKIWIWVATLILSISALYGQKINQIAQIVGIRDNSLVGYGLVIGLNGTGDKSGSKFTMQSIANMLESVNVKLSANDIKSKNVAAVMVTASLPPFARQGDKLDILVSSIGDAKSINGGTLVMTPLTGVDGNIYALAQGNITFGESGSTLSGTIIGGASVEREIAYNLYNQENATLSLKSSDLQNAIKIQQALNDVFRDAIAVAVDARTIKLKKPENLSMVEFLALVEEVEIDYSRKERIVIDEKSGTIVAGVGITIDPVVVTHGDITIKISDEMPDDPEAIKLEDGTMMSRAQGTISSTNGTKPTVSSVVKALQRMGATPRNVISILESMKKSGALNADIEVM.

A signal peptide spans 1–24; the sequence is MRRKNNNKIWIWVATLILSISALY.

Belongs to the FlgI family. As to quaternary structure, the basal body constitutes a major portion of the flagellar organelle and consists of four rings (L,P,S, and M) mounted on a central rod.

The protein resides in the periplasm. It localises to the bacterial flagellum basal body. In terms of biological role, assembles around the rod to form the L-ring and probably protects the motor/basal body from shearing forces during rotation. The polypeptide is Flagellar P-ring protein (Helicobacter hepaticus (strain ATCC 51449 / 3B1)).